A 413-amino-acid polypeptide reads, in one-letter code: Glutamate-1-semialdehyde 2,1-aminomutase (413 aa).

At lysine 260 the chain carries N6-(pyridoxal phosphate)lysine.

The protein belongs to the class-III pyridoxal-phosphate-dependent aminotransferase family. HemL subfamily. Pyridoxal 5'-phosphate serves as cofactor.

It is found in the cytoplasm. The catalysed reaction is (S)-4-amino-5-oxopentanoate = 5-aminolevulinate. The protein operates within porphyrin-containing compound metabolism; protoporphyrin-IX biosynthesis; 5-aminolevulinate from L-glutamyl-tRNA(Glu): step 2/2. The protein is Glutamate-1-semialdehyde 2,1-aminomutase of Methanoregula boonei (strain DSM 21154 / JCM 14090 / 6A8).